The sequence spans 400 residues: Protein phyllopod (400 aa).

Positions 109–127 are interaction with sina; sequence QERTKLRPVAMVRPTVRVQ. Positions 125-145 are disordered; the sequence is RVQPQSQPQLQPQVPINPTPA. Low complexity predominate over residues 127-138; it reads QPQSQPQLQPQV. The interaction with ttk stretch occupies residues 241 to 320; that stretch reads YQRFPQPSVD…TAISEVLPTA (80 aa). The stretch at 319–362 forms a coiled coil; the sequence is TARYQVTHEENKENQQAQEMELELEEEEEVDGRAELEVVQEAEA. The tract at residues 346–382 is disordered; the sequence is EEVDGRAELEVVQEAEAPLEPQSHHKQGNSHQNSHQA.

In terms of assembly, component of some E3 complex at least composed of sina, ebi and phyl, required for the degradation of ttk. As to expression, in embryos, it is ubiquitously present before cellularization. During stages 9-11, it is expressed in neuroblasts and the SOP cells. From stage 12 onward, it decreases, but remains in a subset of PNS cells at stages 12-14. Weakly expressed in wing imaginal disks, in the SOP cells of wing margin bristles, notal macrochaetes, and other sensory organs. In leg disks, it is expressed in the precursors of the femoral chordotonal organs, as well as in external sensory SOP cells. Strongly expressed in the eye-antenna disk, it is specifically expressed in R1, R6 and R7 cells, and not in R3, R3, R4, R5 and R8 cells.

The protein localises to the nucleus. Its function is as follows. Essential adapter component of E3 ubiquitin ligase complexes; involved in R7 photoreceptor cell differentiation, embryonic nervous system, external sensory organ development and specification of particular muscles. E3 ubiquitin ligase complexes mediate ubiquitination and subsequent proteasomal degradation of target proteins. Required for specification of R7 photoreceptor cell fate in the eye by participating in the ubiquitination and subsequent proteasomal degradation of Tramtrack (ttk), a general inhibitor of photoreceptor differentiation. Acts downstream of Notch signaling to specify the fate of the SOP (sensory organ precursor) cells and their progeny, probably via the sina-mediated proteasomal degradation of ttk. Its restricted pattern of expression, upon Notch and Ras signaling pathways, suggests that it acts as a key determinant in E3 complexes to trigger protein proteolysis in appropriate cells. The polypeptide is Protein phyllopod (phyl) (Drosophila melanogaster (Fruit fly)).